Here is a 144-residue protein sequence, read N- to C-terminus: Ribosomal RNA large subunit methyltransferase H (144 aa).

Residues Leu-68, Gly-96, and 112–117 (FSKLTF) each bind S-adenosyl-L-methionine.

The protein belongs to the RNA methyltransferase RlmH family. Homodimer.

It localises to the cytoplasm. It carries out the reaction pseudouridine(1915) in 23S rRNA + S-adenosyl-L-methionine = N(3)-methylpseudouridine(1915) in 23S rRNA + S-adenosyl-L-homocysteine + H(+). Its function is as follows. Specifically methylates the pseudouridine at position 1915 (m3Psi1915) in 23S rRNA. This chain is Ribosomal RNA large subunit methyltransferase H, found in Mycoplasmopsis synoviae (strain 53) (Mycoplasma synoviae).